The chain runs to 349 residues: tRNA N6-adenosine threonylcarbamoyltransferase (349 aa).

Residues H117 and H121 each coordinate Fe cation. Substrate is bound by residues 140–144, D173, G186, and N284; that span reads LVSGG. D312 is a binding site for Fe cation.

This sequence belongs to the KAE1 / TsaD family. Requires Fe(2+) as cofactor.

The protein localises to the cytoplasm. The enzyme catalyses L-threonylcarbamoyladenylate + adenosine(37) in tRNA = N(6)-L-threonylcarbamoyladenosine(37) in tRNA + AMP + H(+). Its function is as follows. Required for the formation of a threonylcarbamoyl group on adenosine at position 37 (t(6)A37) in tRNAs that read codons beginning with adenine. Is involved in the transfer of the threonylcarbamoyl moiety of threonylcarbamoyl-AMP (TC-AMP) to the N6 group of A37, together with TsaE and TsaB. TsaD likely plays a direct catalytic role in this reaction. The sequence is that of tRNA N6-adenosine threonylcarbamoyltransferase from Psychrobacter arcticus (strain DSM 17307 / VKM B-2377 / 273-4).